We begin with the raw amino-acid sequence, 172 residues long: 3-hydroxydecanoyl-[acyl-carrier-protein] dehydratase (172 aa).

His71 is a catalytic residue.

This sequence belongs to the thioester dehydratase family. FabA subfamily. Homodimer.

It localises to the cytoplasm. The enzyme catalyses a (3R)-hydroxyacyl-[ACP] = a (2E)-enoyl-[ACP] + H2O. It carries out the reaction (3R)-hydroxydecanoyl-[ACP] = (2E)-decenoyl-[ACP] + H2O. The catalysed reaction is (2E)-decenoyl-[ACP] = (3Z)-decenoyl-[ACP]. The protein operates within lipid metabolism; fatty acid biosynthesis. Necessary for the introduction of cis unsaturation into fatty acids. Catalyzes the dehydration of (3R)-3-hydroxydecanoyl-ACP to E-(2)-decenoyl-ACP and then its isomerization to Z-(3)-decenoyl-ACP. Can catalyze the dehydratase reaction for beta-hydroxyacyl-ACPs with saturated chain lengths up to 16:0, being most active on intermediate chain length. In Proteus mirabilis (strain HI4320), this protein is 3-hydroxydecanoyl-[acyl-carrier-protein] dehydratase.